We begin with the raw amino-acid sequence, 237 residues long: Phosphoribosylaminoimidazole-succinocarboxamide synthase (237 aa).

This sequence belongs to the SAICAR synthetase family.

The enzyme catalyses 5-amino-1-(5-phospho-D-ribosyl)imidazole-4-carboxylate + L-aspartate + ATP = (2S)-2-[5-amino-1-(5-phospho-beta-D-ribosyl)imidazole-4-carboxamido]succinate + ADP + phosphate + 2 H(+). Its pathway is purine metabolism; IMP biosynthesis via de novo pathway; 5-amino-1-(5-phospho-D-ribosyl)imidazole-4-carboxamide from 5-amino-1-(5-phospho-D-ribosyl)imidazole-4-carboxylate: step 1/2. The chain is Phosphoribosylaminoimidazole-succinocarboxamide synthase from Listeria monocytogenes serotype 4a (strain HCC23).